Consider the following 58-residue polypeptide: NADH dehydrogenase [ubiquinone] 1 beta subcomplex subunit 1 (58 aa).

A helical membrane pass occupies residues 11–27 (HWVHVLVPMGFVIGCYL).

This sequence belongs to the complex I NDUFB1 subunit family. Complex I is composed of 45 different subunits.

The protein localises to the mitochondrion inner membrane. Its function is as follows. Accessory subunit of the mitochondrial membrane respiratory chain NADH dehydrogenase (Complex I) that is believed not to be involved in catalysis. Complex I functions in the transfer of electrons from NADH to the respiratory chain. The immediate electron acceptor for the enzyme is believed to be ubiquinone. This chain is NADH dehydrogenase [ubiquinone] 1 beta subcomplex subunit 1 (NDUFB1), found in Homo sapiens (Human).